Consider the following 725-residue polypeptide: Threonine--tRNA ligase, cytoplasmic (725 aa).

The TGS domain maps to 80 to 142 (EPIQITLPDG…EGNAKLELLK (63 aa)).

The protein belongs to the class-II aminoacyl-tRNA synthetase family.

Its subcellular location is the cytoplasm. It catalyses the reaction tRNA(Thr) + L-threonine + ATP = L-threonyl-tRNA(Thr) + AMP + diphosphate + H(+). This chain is Threonine--tRNA ligase, cytoplasmic, found in Caenorhabditis elegans.